Reading from the N-terminus, the 319-residue chain is ATP-dependent 6-phosphofructokinase (319 aa).

Gly-11 contributes to the ATP binding site. Residue 21–25 (RAVVR) participates in ADP binding. ATP contacts are provided by residues 72-73 (RY) and 102-105 (GDGS). A Mg(2+)-binding site is contributed by Asp-103. 125–127 (TID) is a substrate binding site. The Proton acceptor role is filled by Asp-127. Arg-154 serves as a coordination point for ADP. Substrate-binding positions include Arg-162 and 169–171 (MGR). Residues 185–187 (GAE), Arg-211, and 213–215 (KKH) contribute to the ADP site. Substrate is bound by residues Glu-222, Arg-243, and 249–252 (HVQR).

It belongs to the phosphofructokinase type A (PFKA) family. ATP-dependent PFK group I subfamily. Prokaryotic clade 'B1' sub-subfamily. Homotetramer. Requires Mg(2+) as cofactor.

It is found in the cytoplasm. It carries out the reaction beta-D-fructose 6-phosphate + ATP = beta-D-fructose 1,6-bisphosphate + ADP + H(+). The protein operates within carbohydrate degradation; glycolysis; D-glyceraldehyde 3-phosphate and glycerone phosphate from D-glucose: step 3/4. Allosterically activated by ADP and other diphosphonucleosides, and allosterically inhibited by phosphoenolpyruvate. Catalyzes the phosphorylation of D-fructose 6-phosphate to fructose 1,6-bisphosphate by ATP, the first committing step of glycolysis. The chain is ATP-dependent 6-phosphofructokinase from Listeria monocytogenes serotype 4a (strain HCC23).